The following is a 245-amino-acid chain: tRNA pseudouridine synthase A (245 aa).

Catalysis depends on aspartate 52, which acts as the Nucleophile. Residue tyrosine 111 participates in substrate binding.

Belongs to the tRNA pseudouridine synthase TruA family. Homodimer.

It carries out the reaction uridine(38/39/40) in tRNA = pseudouridine(38/39/40) in tRNA. Formation of pseudouridine at positions 38, 39 and 40 in the anticodon stem and loop of transfer RNAs. This Rickettsia bellii (strain RML369-C) protein is tRNA pseudouridine synthase A.